The following is an 856-amino-acid chain: Leucine--tRNA ligase (856 aa).

The short motif at 53-63 is the 'HIGH' region element; that stretch reads PYPSGNLHMGH. The 'KMSKS' region signature appears at 622–626; the sequence is KMSKS. Lysine 625 is a binding site for ATP.

The protein belongs to the class-I aminoacyl-tRNA synthetase family.

It is found in the cytoplasm. The enzyme catalyses tRNA(Leu) + L-leucine + ATP = L-leucyl-tRNA(Leu) + AMP + diphosphate. The chain is Leucine--tRNA ligase from Prochlorococcus marinus (strain MIT 9301).